A 220-amino-acid polypeptide reads, in one-letter code: 3-dehydroquinate dehydratase (220 aa).

Residues 29–31 (EFR) and Arg-56 each bind 3-dehydroquinate. His-116 serves as the catalytic Proton donor/acceptor. Lys-142 (schiff-base intermediate with substrate) is an active-site residue. 3-dehydroquinate is bound by residues Arg-180, Ser-200, and Gln-204.

Belongs to the type-I 3-dehydroquinase family. As to quaternary structure, homodimer.

It carries out the reaction 3-dehydroquinate = 3-dehydroshikimate + H2O. It functions in the pathway metabolic intermediate biosynthesis; chorismate biosynthesis; chorismate from D-erythrose 4-phosphate and phosphoenolpyruvate: step 3/7. In terms of biological role, involved in the third step of the chorismate pathway, which leads to the biosynthesis of aromatic amino acids. Catalyzes the cis-dehydration of 3-dehydroquinate (DHQ) and introduces the first double bond of the aromatic ring to yield 3-dehydroshikimate. The sequence is that of 3-dehydroquinate dehydratase from Methanocaldococcus jannaschii (strain ATCC 43067 / DSM 2661 / JAL-1 / JCM 10045 / NBRC 100440) (Methanococcus jannaschii).